A 65-amino-acid chain; its full sequence is Ubiquinol-cytochrome-c reductase complex assembly factor 6 (65 aa).

Over 1–9 the chain is Mitochondrial matrix; that stretch reads MPAGVSWPR. A helical; Signal-anchor for type II membrane protein membrane pass occupies residues 10-32; the sequence is YLRMFAASVLSMFAGAQVVHHYY. The Mitochondrial intermembrane segment spans residues 33–65; the sequence is RPDLSIPEIPPKPGELRTELLGLKERQMDSQKQ.

This sequence belongs to the UQCC6 family. As to expression, highly expressed in skeletal and cardiac muscle (at protein level).

Its subcellular location is the mitochondrion inner membrane. Required for the assembly and stability of the mitochondrial ubiquinol-cytochrome c reductase complex (complex III (CIII) or cytochrome b-c1 complex), a multisubunit transmembrane complex that is part of the mitochondrial electron transport chain (ETC) which drives oxidative phosphorylation. Mediates early complex III biogenesis. Participates in regulating the levels of electron transport chain proteins, and therefore energy supply, in response to changes in energy demand. Also required for cytochrome c oxidase complex (complex IV) assembly. This Danio rerio (Zebrafish) protein is Ubiquinol-cytochrome-c reductase complex assembly factor 6 (uqcc6).